The chain runs to 141 residues: Succinate dehydrogenase assembly factor 2, mitochondrial (141 aa).

It belongs to the SDHAF2 family. Interacts with the flavoprotein subunit within the SDH catalytic dimer.

It localises to the mitochondrion matrix. Plays an essential role in the assembly of succinate dehydrogenase (SDH), an enzyme complex (also referred to as respiratory complex II) that is a component of both the tricarboxylic acid (TCA) cycle and the mitochondrial electron transport chain, and which couples the oxidation of succinate to fumarate with the reduction of ubiquinone (coenzyme Q) to ubiquinol. Required for flavinylation (covalent attachment of FAD) of the flavoprotein subunit of the SDH catalytic dimer. The chain is Succinate dehydrogenase assembly factor 2, mitochondrial from Dictyostelium discoideum (Social amoeba).